The chain runs to 211 residues: Ribonuclease T (211 aa).

The region spanning 24-198 (VVVDVETGGF…YDAEKTAHLF (175 aa)) is the Exonuclease domain. Positions 27, 29, 185, and 190 each coordinate Mg(2+). Histidine 185 functions as the Proton donor/acceptor in the catalytic mechanism.

It belongs to the RNase T family. In terms of assembly, homodimer. Mg(2+) serves as cofactor.

Functionally, trims short 3' overhangs of a variety of RNA species, leaving a one or two nucleotide 3' overhang. Responsible for the end-turnover of tRNA: specifically removes the terminal AMP residue from uncharged tRNA (tRNA-C-C-A). Also appears to be involved in tRNA biosynthesis. The chain is Ribonuclease T from Xylella fastidiosa (strain 9a5c).